A 181-amino-acid polypeptide reads, in one-letter code: Phospholipase A2 inhibitor gamma subunit B (181 aa).

8 cysteine pairs are disulfide-bonded: cysteine 3/cysteine 27, cysteine 6/cysteine 13, cysteine 20/cysteine 48, cysteine 54/cysteine 75, cysteine 76/cysteine 81, cysteine 101/cysteine 126, cysteine 119/cysteine 146, and cysteine 152/cysteine 172.

The protein belongs to the CNF-like-inhibitor family. Heterotrimer of 2 subunits A and 1 subunit B. As to expression, expressed by the liver.

The protein localises to the secreted. Strongly inhibits its own venom PLA2 and all other PLA2s tested including Elapid, Crotalid and Viperid venom PLA2s, as well as honeybee PLA2s. This chain is Phospholipase A2 inhibitor gamma subunit B, found in Laticauda semifasciata (Black-banded sea krait).